A 440-amino-acid polypeptide reads, in one-letter code: NADH-quinone oxidoreductase subunit H (440 aa).

The next 9 helical transmembrane spans lie at 11 to 31 (VWLI…WTIF), 83 to 103 (IVFN…WSVI), 123 to 143 (VPVA…GVVL), 164 to 184 (MISY…FSGS), 207 to 227 (IAGH…ITMF), 261 to 281 (FLAE…LFLG), 299 to 319 (WWGL…FVWV), 331 to 351 (FMDL…LLVA), and 366 to 386 (VFLV…FMGG).

The protein belongs to the complex I subunit 1 family. NDH-1 is composed of 14 different subunits. Subunits NuoA, H, J, K, L, M, N constitute the membrane sector of the complex.

The protein resides in the cell membrane. It carries out the reaction a quinone + NADH + 5 H(+)(in) = a quinol + NAD(+) + 4 H(+)(out). Functionally, NDH-1 shuttles electrons from NADH, via FMN and iron-sulfur (Fe-S) centers, to quinones in the respiratory chain. The immediate electron acceptor for the enzyme in this species is believed to be ubiquinone. Couples the redox reaction to proton translocation (for every two electrons transferred, four hydrogen ions are translocated across the cytoplasmic membrane), and thus conserves the redox energy in a proton gradient. This subunit may bind ubiquinone. This is NADH-quinone oxidoreductase subunit H from Cutibacterium acnes (strain DSM 16379 / KPA171202) (Propionibacterium acnes).